The chain runs to 575 residues: Epsin-1 (575 aa).

The a 1,2-diacyl-sn-glycero-3-phospho-(1D-myo-inositol-4,5-bisphosphate) site is built by Arg8, Lys11, Arg25, Asn30, Arg63, and His73. An ENTH domain is found at 12–144 (NIVHNYSEAE…RDEDRLREER (133 aa)). Residues 149 to 186 (KTKEKLAQTATASSAAVGSGPPPEAEQAWPQSSGEEEL) are disordered. Over residues 157–167 (TATASSAAVGS) the composition is skewed to low complexity. 3 UIM domains span residues 183 to 202 (EEEL…ADQP), 208 to 227 (EDDV…HDKE), and 233 to 252 (GDDL…TGGK). Disordered stretches follow at residues 264–283 (FTTP…ASVP) and 293–575 (SDPW…PFLL). A run of 8 repeats spans residues 274–276 (DPW), 294–296 (DPW), 306–308 (DPW), 319–321 (DPW), 332–334 (DPW), 349–351 (DPW), 367–369 (DPW), and 377–379 (DPW). Residues 274-379 (DPWGGPASVP…APAPAFSDPW (106 aa)) are 8 X 3 AA repeats of D-P-W. The segment covering 306 to 316 (DPWGGAAPTPA) has biased composition (low complexity). The span at 333-346 (PWGGTPAPAAGEGP) shows a compositional bias: low complexity. Positions 367–379 (DPWAPAPAFSDPW) are enriched in low complexity. The residue at position 382 (Ser382) is a Phosphoserine. A [DE]-X(1,2)-F-X-X-[FL]-X-X-X-R motif motif is present at residues 401 to 410 (DEFSDFDRLR). Phosphoserine occurs at positions 418 and 419. Thr420 is modified (phosphothreonine). Phosphoserine is present on residues Ser434, Ser446, and Ser453. The span at 453–467 (SPPPAATPTPTPPTR) shows a compositional bias: pro residues. 3 positions are modified to phosphothreonine: Thr459, Thr463, and Thr469. At Ser472 the chain carries Phosphoserine. Position 493 is a phosphothreonine (Thr493). Repeat copies occupy residues 501–503 (NPF) and 517–519 (NPF). A 3 X 3 AA repeats of N-P-F region spans residues 501–573 (NPFLPSGAPA…GPPAPNTNPF (73 aa)). At Arg533 the chain carries Omega-N-methylarginine. The span at 556 to 569 (GLPPMMPPGPPAPN) shows a compositional bias: pro residues. Repeat 3 spans residues 571–573 (NPF).

This sequence belongs to the epsin family. In terms of assembly, monomer. Binds ITSN1. Binds clathrin, ZBTB16/ZNF145, AP2A1 and AP2A2. Binds ubiquitinated proteins. Interacts with RALBP1 in a complex also containing NUMB and TFAP2A during interphase and mitosis. Interacts with AP2B1. Interacts with UBQLN2. Interacts with REPS2; the interaction is direct. Interacts with EPS15; the interaction is direct. Interacts with ENTREP1. Post-translationally, ubiquitinated. In terms of processing, phosphorylated on serine and/or threonine residues in mitotic cells. Phosphorylation reduces interaction with REPS2, AP-2 and the membrane fraction. Depolarization of synaptosomes results in dephosphorylation. In terms of tissue distribution, ubiquitously expressed. Detected in liver, spleen and testis, and weakly in lung and thymus (at protein level).

The protein resides in the cytoplasm. It localises to the cell membrane. Its subcellular location is the nucleus. The protein localises to the membrane. It is found in the clathrin-coated pit. Functionally, binds to membranes enriched in phosphatidylinositol 4,5-bisphosphate (PtdIns(4,5)P2). Modifies membrane curvature and facilitates the formation of clathrin-coated invaginations. Regulates receptor-mediated endocytosis. In Rattus norvegicus (Rat), this protein is Epsin-1 (Epn1).